The sequence spans 105 residues: Thioredoxin (105 aa).

The Thioredoxin domain occupies 1–105; the sequence is MASNVTDKSF…SLIEWINNNI (105 aa). Cys30 and Cys33 form a disulfide bridge.

This sequence belongs to the thioredoxin family.

In terms of biological role, component of the thioredoxin-thioredoxin reductase system. Participates in various redox reactions through the reversible oxidation of its active center dithiol to a disulfide and catalyzes dithiol-disulfide exchange reactions. This chain is Thioredoxin (trxA), found in Rickettsia bellii (strain RML369-C).